Consider the following 801-residue polypeptide: Phenylalanine--tRNA ligase beta subunit (801 aa).

The tRNA-binding domain occupies G39–F147. The region spanning V401 to T477 is the B5 domain. Residues D455, D461, E464, and E465 each coordinate Mg(2+). The 94-residue stretch at S708–R801 folds into the FDX-ACB domain.

This sequence belongs to the phenylalanyl-tRNA synthetase beta subunit family. Type 1 subfamily. In terms of assembly, tetramer of two alpha and two beta subunits. The cofactor is Mg(2+).

It is found in the cytoplasm. It catalyses the reaction tRNA(Phe) + L-phenylalanine + ATP = L-phenylalanyl-tRNA(Phe) + AMP + diphosphate + H(+). The protein is Phenylalanine--tRNA ligase beta subunit of Geobacter sulfurreducens (strain ATCC 51573 / DSM 12127 / PCA).